A 320-amino-acid polypeptide reads, in one-letter code: Adhesin MafA 3 (320 aa).

Residues 1-18 (MQARLLIPILFSVFILSA) form the signal peptide. Cys-19 carries N-palmitoyl cysteine lipidation. Cys-19 carries S-diacylglycerol cysteine lipidation. The segment covering 288–298 (HTGNSAPSVET) has biased composition (polar residues). Positions 288–320 (HTGNSAPSVETDNSHEGYGYSDEVVRQHRQGQP) are disordered.

The protein belongs to the MafA family.

The protein resides in the cell outer membrane. The protein is Adhesin MafA 3 (mafA3) of Neisseria meningitidis serogroup C / serotype 2a (strain ATCC 700532 / DSM 15464 / FAM18).